A 542-amino-acid polypeptide reads, in one-letter code: Zinc finger CCHC domain-containing protein 7 (542 aa).

The segment at 110–144 (QAQEKTQSPATPRSNKVANKCKRSNKKPEPEESPS) is disordered. Residues 112 to 126 (QEKTQSPATPRSNKV) are compositionally biased toward polar residues. Residues lysine 129 and lysine 136 each participate in a glycyl lysine isopeptide (Lys-Gly) (interchain with G-Cter in SUMO2) cross-link. Serine 142 bears the Phosphoserine mark. Glycyl lysine isopeptide (Lys-Gly) (interchain with G-Cter in SUMO2) cross-links involve residues lysine 236 and lysine 251. 3 CCHC-type zinc fingers span residues 238–255 (VTCRNCDKRGHLSKNCPL), 260–277 (RPCCLCSERGHLQYGCPA), and 301–318 (KRCDRCDMIGHYADACPE). Residue lysine 336 forms a Glycyl lysine isopeptide (Lys-Gly) (interchain with G-Cter in SUMO2) linkage. The CCHC-type 4 zinc-finger motif lies at 345-362 (VYCYNCAQKGHYGHECTE). Positions 396-542 (LKDIKKNGDF…RKKKPKSSGF (147 aa)) are disordered. Residue lysine 410 forms a Glycyl lysine isopeptide (Lys-Gly) (interchain with G-Cter in SUMO2) linkage. Residues 412–421 (PHGEETDRYH) are compositionally biased toward basic and acidic residues. A compositionally biased stretch (basic residues) spans 422 to 435 (HDRRKSRFSGKRSR). A Glycyl lysine isopeptide (Lys-Gly) (interchain with G-Cter in SUMO2) cross-link involves residue lysine 432. A compositionally biased stretch (basic and acidic residues) spans 436–456 (WPRESKETQKEKTRGREGEKH). Lysine 474 is covalently cross-linked (Glycyl lysine isopeptide (Lys-Gly) (interchain with G-Cter in SUMO2)). Low complexity predominate over residues 474-489 (KPNSSSSSNSQKPSKS). Serine 478 and serine 480 each carry phosphoserine. Residues lysine 485 and lysine 488 each participate in a glycyl lysine isopeptide (Lys-Gly) (interchain with G-Cter in SUMO2) cross-link. Basic and acidic residues-rich tracts occupy residues 499-510 (LREEKLRRESMR) and 518-528 (FVEDGSHDDLF). Residue lysine 531 forms a Glycyl lysine isopeptide (Lys-Gly) (interchain with G-Cter in SUMO2) linkage. Positions 531–542 (KQRKKKPKSSGF) are enriched in basic residues.

In terms of assembly, component of a nucleolar TRAMP-like complex, an ATP-dependent exosome regulatory complex consisting of a helicase (MTREX), an oligadenylate polymerase (TENT4B or TENT4A), and a substrate specific RNA-binding factor (ZCCHC7 or ZCCHC8). Several TRAMP-like complexes exist with specific compositions and are associated with nuclear, or nucleolar RNA exosomes.

The protein localises to the nucleus. It localises to the nucleolus. The chain is Zinc finger CCHC domain-containing protein 7 (Zcchc7) from Rattus norvegicus (Rat).